A 217-amino-acid polypeptide reads, in one-letter code: Large ribosomal subunit protein uL16 (217 aa).

The protein belongs to the universal ribosomal protein uL16 family. Component of the small ribosomal subunit. Mature ribosomes consist of a small (40S) and a large (60S) subunit. The 40S subunit contains about 33 different proteins and 1 molecule of RNA (18S). The 60S subunit contains about 49 different proteins and 3 molecules of RNA (25S, 5.8S and 5S).

The chain is Large ribosomal subunit protein uL16 (rpl10) from Dictyostelium discoideum (Social amoeba).